We begin with the raw amino-acid sequence, 212 residues long: uncharacterized protein (212 aa).

The segment covering 87-105 (NNNNNNNNNNNHNHNNSNN) has biased composition (low complexity). Residues 87-107 (NNNNNNNNNNNHNHNNSNNTA) are disordered.

This is an uncharacterized protein from Saccharomyces cerevisiae (strain ATCC 204508 / S288c) (Baker's yeast).